The sequence spans 268 residues: Undecaprenyl-diphosphatase (268 aa).

The next 7 helical transmembrane spans lie at 47–67 (FAVL…FSKL), 85–105 (IGVL…GGLI), 109–129 (LFNP…LLWV), 144–164 (FPLP…FPGV), 184–204 (AAEF…VYDL), 217–237 (LIVA…VKTF), and 246–266 (FALF…ALAL).

The protein belongs to the UppP family.

The protein resides in the cell inner membrane. The enzyme catalyses di-trans,octa-cis-undecaprenyl diphosphate + H2O = di-trans,octa-cis-undecaprenyl phosphate + phosphate + H(+). Its function is as follows. Catalyzes the dephosphorylation of undecaprenyl diphosphate (UPP). Confers resistance to bacitracin. In Rhodopseudomonas palustris (strain BisA53), this protein is Undecaprenyl-diphosphatase.